The primary structure comprises 49 residues: Large ribosomal subunit protein bL33C (49 aa).

The disordered stretch occupies residues 21–49; that stretch reads KNKRNNPDRVEFKKYCPRDKKSTLHRETK. A compositionally biased stretch (basic and acidic residues) spans 25 to 49; the sequence is NNPDRVEFKKYCPRDKKSTLHRETK.

This sequence belongs to the bacterial ribosomal protein bL33 family.

This chain is Large ribosomal subunit protein bL33C, found in Bacillus licheniformis (strain ATCC 14580 / DSM 13 / JCM 2505 / CCUG 7422 / NBRC 12200 / NCIMB 9375 / NCTC 10341 / NRRL NRS-1264 / Gibson 46).